The primary structure comprises 398 residues: Stimulator of interferon genes protein (398 aa).

The Cytoplasmic segment spans residues 1-16 (MSVMGEDALVPRARSR). A helical transmembrane segment spans residues 17-37 (LPVMCAAGLGFLTLAVAWLLD). Residues 38–44 (SDKFSER) are Lumenal-facing. Residues 45 to 65 (AGIIAFGLMLERFIYCICLLA) traverse the membrane as a helical segment. The Cytoplasmic portion of the chain corresponds to 66 to 91 (EELLFHSRQRYHGRMSEIFRACFRGS). A helical membrane pass occupies residues 92–112 (GILGMCAIFLMLMLGGVSFSV). Residues 113–120 (KQWSHFNL) are Lumenal-facing. A helical transmembrane segment spans residues 121–141 (MCAGYMLLNSLGVLGPAPVEI). The Cytoplasmic segment spans residues 142–398 (SEICEAKKMN…FNPSSAMKQN (257 aa)). Residues 150–331 (MNVAHGLAWS…QNLKQQDGEI (182 aa)) are cyclic dinucleotide-binding domain (CBD). 2',3'-cGAMP contacts are provided by S159, Y164, R230, and T254. Residues S159, Y164, 230–233 (RSYT), and T254 each bind 3',3'-c-di-GMP. The segment at 375 to 398 (PQSLRSEPVETTDYFNPSSAMKQN) is disordered. Polar residues predominate over residues 387–398 (DYFNPSSAMKQN).

The protein belongs to the STING family. In terms of assembly, homodimer; forms a homodimer in absence of cyclic nucleotide (c-di-GMP or cGAMP). Homotetramer; in presence of cyclic nucleotide (c-di-GMP or cGAMP), forms tetramers and higher-order oligomers through side-by-side packing. Interacts (when phosphorylated) with irf3; following activation and phosphorylation by tbk1, recruits irf3. Post-translationally, phosphorylation by TBK1 leads to activation and production of IFN-beta. Following cyclic nucleotide (c-di-GMP or cGAMP)-binding, activation and translocation from the endoplasmic reticulum, STING1 is phosphorylated by tbk1, leading to recruitment of the transcription factor irf3 to induce type-I interferons and other cytokines.

The protein resides in the endoplasmic reticulum membrane. It is found in the cytoplasm. Its subcellular location is the perinuclear region. The protein localises to the endoplasmic reticulum-Golgi intermediate compartment membrane. It localises to the golgi apparatus membrane. The protein resides in the cytoplasmic vesicle. It is found in the autophagosome membrane. It catalyses the reaction H(+)(in) = H(+)(out). In terms of biological role, facilitator of innate immune signaling that acts as a sensor of cytosolic DNA from bacteria and viruses and promotes the production of type I interferon (IFN-alpha and IFN-beta). Innate immune response is triggered in response to non-CpG double-stranded DNA from viruses and bacteria delivered to the cytoplasm. Acts by binding cyclic dinucleotides: recognizes and binds cyclic di-GMP (c-di-GMP), a second messenger produced by bacteria, and cyclic GMP-AMP (cGAMP), a messenger produced by CGAS in response to DNA virus in the cytosol. Upon binding of c-di-GMP or cGAMP, STING1 oligomerizes and is able to activate both NF-kappa-B and irf3 transcription pathways to induce expression of type I interferon and exert a potent anti-viral state. Exhibits 2',3' phosphodiester linkage-specific ligand recognition: can bind both 2'-3' linked cGAMP and 3'-3' linked cGAMP but is preferentially activated by 2'-3' linked cGAMP. In addition to promote the production of type I interferons, plays a direct role in autophagy. Following cGAMP-binding, STING1 buds from the endoplasmic reticulum into COPII vesicles, which then form the endoplasmic reticulum-Golgi intermediate compartment (ERGIC). The ERGIC serves as the membrane source for LC3 lipidation, leading to formation of autophagosomes that target cytosolic DNA or DNA viruses for degradation by the lysosome. Promotes autophagy by acting as a proton channel that directs proton efflux from the Golgi to facilitate LC3 lipidation. The autophagy- and interferon-inducing activities can be uncoupled and autophagy induction is independent of TBK1 phosphorylation. The sequence is that of Stimulator of interferon genes protein from Danio rerio (Zebrafish).